The following is a 274-amino-acid chain: Large ribosomal subunit protein uL2 (274 aa).

Positions 223–256 (VVMNPVDHPHGGGEGKTGEGRHPVDPWGNLTKGY) are disordered. Residues 229 to 246 (DHPHGGGEGKTGEGRHPV) are compositionally biased toward basic and acidic residues.

This sequence belongs to the universal ribosomal protein uL2 family. Part of the 50S ribosomal subunit. Forms a bridge to the 30S subunit in the 70S ribosome.

Functionally, one of the primary rRNA binding proteins. Required for association of the 30S and 50S subunits to form the 70S ribosome, for tRNA binding and peptide bond formation. It has been suggested to have peptidyltransferase activity; this is somewhat controversial. Makes several contacts with the 16S rRNA in the 70S ribosome. The chain is Large ribosomal subunit protein uL2 from Albidiferax ferrireducens (strain ATCC BAA-621 / DSM 15236 / T118) (Rhodoferax ferrireducens).